The sequence spans 584 residues: ATP-dependent lipid A-core flippase (584 aa).

A run of 5 helical transmembrane segments spans residues leucine 18 to leucine 38, valine 65 to phenylalanine 85, isoleucine 155 to leucine 175, isoleucine 252 to alanine 272, and valine 277 to methionine 297. In terms of domain architecture, ABC transmembrane type-1 spans valine 30 to arginine 312. The ABC transporter domain maps to isoleucine 344–leucine 580. ATP is bound at residue glycine 378–serine 385.

It belongs to the ABC transporter superfamily. Lipid exporter (TC 3.A.1.106) family. In terms of assembly, homodimer.

Its subcellular location is the cell inner membrane. It catalyses the reaction ATP + H2O + lipid A-core oligosaccharideSide 1 = ADP + phosphate + lipid A-core oligosaccharideSide 2.. Involved in lipopolysaccharide (LPS) biosynthesis. Translocates lipid A-core from the inner to the outer leaflet of the inner membrane. Transmembrane domains (TMD) form a pore in the inner membrane and the ATP-binding domain (NBD) is responsible for energy generation. The chain is ATP-dependent lipid A-core flippase from Blochmanniella pennsylvanica (strain BPEN).